Consider the following 89-residue polypeptide: Small ribosomal subunit protein uS15 (89 aa).

It belongs to the universal ribosomal protein uS15 family. Part of the 30S ribosomal subunit. Forms a bridge to the 50S subunit in the 70S ribosome, contacting the 23S rRNA.

One of the primary rRNA binding proteins, it binds directly to 16S rRNA where it helps nucleate assembly of the platform of the 30S subunit by binding and bridging several RNA helices of the 16S rRNA. In terms of biological role, forms an intersubunit bridge (bridge B4) with the 23S rRNA of the 50S subunit in the ribosome. The protein is Small ribosomal subunit protein uS15 of Beutenbergia cavernae (strain ATCC BAA-8 / DSM 12333 / CCUG 43141 / JCM 11478 / NBRC 16432 / NCIMB 13614 / HKI 0122).